We begin with the raw amino-acid sequence, 498 residues long: ATP synthase subunit beta, chloroplastic (498 aa).

An ATP-binding site is contributed by 172–179 (GGAGVGKT).

The protein belongs to the ATPase alpha/beta chains family. F-type ATPases have 2 components, CF(1) - the catalytic core - and CF(0) - the membrane proton channel. CF(1) has five subunits: alpha(3), beta(3), gamma(1), delta(1), epsilon(1). CF(0) has four main subunits: a(1), b(1), b'(1) and c(9-12).

It is found in the plastid. It localises to the chloroplast thylakoid membrane. It catalyses the reaction ATP + H2O + 4 H(+)(in) = ADP + phosphate + 5 H(+)(out). Produces ATP from ADP in the presence of a proton gradient across the membrane. The catalytic sites are hosted primarily by the beta subunits. This is ATP synthase subunit beta, chloroplastic from Carica papaya (Papaya).